Here is a 258-residue protein sequence, read N- to C-terminus: Thiazole synthase (258 aa).

Catalysis depends on K97, which acts as the Schiff-base intermediate with DXP. Residues G158, 184-185, and 206-207 contribute to the 1-deoxy-D-xylulose 5-phosphate site; these read AG and NT.

It belongs to the ThiG family. As to quaternary structure, homotetramer. Forms heterodimers with either ThiH or ThiS.

The protein localises to the cytoplasm. It catalyses the reaction [ThiS sulfur-carrier protein]-C-terminal-Gly-aminoethanethioate + 2-iminoacetate + 1-deoxy-D-xylulose 5-phosphate = [ThiS sulfur-carrier protein]-C-terminal Gly-Gly + 2-[(2R,5Z)-2-carboxy-4-methylthiazol-5(2H)-ylidene]ethyl phosphate + 2 H2O + H(+). It functions in the pathway cofactor biosynthesis; thiamine diphosphate biosynthesis. Functionally, catalyzes the rearrangement of 1-deoxy-D-xylulose 5-phosphate (DXP) to produce the thiazole phosphate moiety of thiamine. Sulfur is provided by the thiocarboxylate moiety of the carrier protein ThiS. In vitro, sulfur can be provided by H(2)S. The sequence is that of Thiazole synthase from Bacteroides fragilis (strain ATCC 25285 / DSM 2151 / CCUG 4856 / JCM 11019 / LMG 10263 / NCTC 9343 / Onslow / VPI 2553 / EN-2).